The following is a 181-amino-acid chain: UPF0302 protein lin2035 (181 aa).

Belongs to the UPF0302 family.

The protein is UPF0302 protein lin2035 of Listeria innocua serovar 6a (strain ATCC BAA-680 / CLIP 11262).